The following is a 253-amino-acid chain: Cyclin-C1-2 (253 aa).

This sequence belongs to the cyclin family. Cyclin C subfamily.

This Arabidopsis thaliana (Mouse-ear cress) protein is Cyclin-C1-2 (CYCC1-2).